A 643-amino-acid polypeptide reads, in one-letter code: Extracellular metalloproteinase 4 (643 aa).

The first 18 residues, 1-18, serve as a signal peptide directing secretion; sequence MHGLMLAGLLALPLSVLG. The propeptide occupies 19–254; that stretch reads HPTESHSSGI…VHSVVDYVSA (236 aa). The span at 47-57 shows a compositional bias: basic and acidic residues; that stretch reads TKSDAVPKQDG. The disordered stretch occupies residues 47–73; it reads TKSDAVPKQDGESFTTSSTGNDNSSSG. Positions 61–73 are enriched in low complexity; that stretch reads TTSSTGNDNSSSG. Asparagine 271 and asparagine 420 each carry an N-linked (GlcNAc...) asparagine glycan. Residue histidine 437 coordinates Zn(2+). Glutamate 438 is an active-site residue. A Zn(2+)-binding site is contributed by histidine 441. N-linked (GlcNAc...) asparagine glycosylation is found at asparagine 603 and asparagine 629.

This sequence belongs to the peptidase M36 family. Requires Zn(2+) as cofactor.

It is found in the secreted. In terms of biological role, secreted metalloproteinase probably acting as a virulence factor. This Trichophyton rubrum (Athlete's foot fungus) protein is Extracellular metalloproteinase 4 (MEP4).